Reading from the N-terminus, the 247-residue chain is MVWQRPDGRKPYELRPINFHTKFTRFAPGSVLTICGETKVLCTVSVAESVPKFLTGSGKGWLTAEYRMLPSATQQRHERELLKLSGRTQEIQRLIGRSLRAALDFEALGERTLTVDADVLQADAGTRTAAITGGFVALAEAISQLLQRGVLERSPLCGQIAAVSVGLLEQEAYLDLNYIEDVAATVDFNVVMNKNLGIIEVQGTAEEGSFSRTQLNQLLDCAETGIQQLLIAQQQAITDWDRLFVGK.

Phosphate contacts are provided by residues Arg-87 and 125–127 (GTR).

It belongs to the RNase PH family. As to quaternary structure, homohexameric ring arranged as a trimer of dimers.

The enzyme catalyses tRNA(n+1) + phosphate = tRNA(n) + a ribonucleoside 5'-diphosphate. In terms of biological role, phosphorolytic 3'-5' exoribonuclease that plays an important role in tRNA 3'-end maturation. Removes nucleotide residues following the 3'-CCA terminus of tRNAs; can also add nucleotides to the ends of RNA molecules by using nucleoside diphosphates as substrates, but this may not be physiologically important. Probably plays a role in initiation of 16S rRNA degradation (leading to ribosome degradation) during starvation. The sequence is that of Ribonuclease PH from Nostoc sp. (strain PCC 7120 / SAG 25.82 / UTEX 2576).